An 839-amino-acid polypeptide reads, in one-letter code: Transient receptor potential cation channel subfamily V member 1 (839 aa).

The interval 1 to 60 (MEKWASLDSDESEPPAQENSCPDPPDRDPNSKPPPAKPHIFATRSRTRLFGKGDSEEASP) is disordered. At 1–433 (MEKWASLDSD…QDKWDRFVKR (433 aa)) the chain is on the cytoplasmic side. The stretch at 111–139 (RLYDRRSIFDAVAQSNCQELESLLSFLQK) is one ANK 1 repeat. Arginine 116 is a binding site for ATP. Serine 117 is subject to Phosphoserine; by PKA and PKD. A Phosphothreonine; by PKA; in vitro modification is found at threonine 145. An ANK 2 repeat occupies 154–186 (TGKTCLLKAMLNLHNGQNDTIALLLDIARKTDS). ATP is bound by residues lysine 156, lysine 161, asparagine 165, 200–203 (YKGQ), and 211–212 (ER). 4 ANK repeats span residues 204–229 (TALHIAIERRNMALVTLLVENGADVQ), 250–277 (ELPLSLAACTNQLAIVKFLLQNSWQPAD), 286–322 (NTVLHALVEVADNTADNTKFVTNMYNEILILGAKLHP), and 336–359 (TPLALAASSGKIGVLAYILQREIH). Threonine 371 carries the post-translational modification Phosphothreonine; by PKA; in vitro. One copy of the ANK 7 repeat lies at 394 to 416 (NSVLEVIAYSSSETPNRHDMLLV). The helical transmembrane segment at 434–455 (IFYFNFFVYCLYMIIFTTAAYY) threads the bilayer. Residues 456 to 472 (RPVEGLPPYKLNNTVGD) lie on the Extracellular side of the membrane. Residues 473 to 497 (YFRVTGEILSVSGGVYFFFRGIQYF) traverse the membrane as a helical segment. Over 498–510 (LQRRPSLKSLFVD) the chain is Cytoplasmic. Serine 503 carries the phosphoserine; by PKC/PRKCE modification. The helical transmembrane segment at 511–532 (SYSEILFFVQSLFMLVSVVLYF) threads the bilayer. Position 512–513 (512–513 (YS)) interacts with resiniferatoxin. Residues 533-535 (SHR) lie on the Extracellular side of the membrane. Residues 536–556 (KEYVASMVFSLAMGWTNMLYY) traverse the membrane as a helical segment. 2 residues coordinate resiniferatoxin: threonine 551 and arginine 558. The Cytoplasmic portion of the chain corresponds to 557 to 559 (TRG). A helical transmembrane segment spans residues 560-598 (FQQMGIYAVMIEKMILRDLCRFMFVYLVFLFGFSTAVVT). Residues 599 to 630 (LIEDGKNNSLPVESPPHKCRGSACRPGNSYNS) are Extracellular-facing. Asparagine 605 is a glycosylation site (N-linked (GlcNAc...) asparagine). Positions 631-652 (LYSTCLELFKFTIGMGDLEFTE) form an intramembrane region, pore-forming. Residue glycine 644 coordinates Na(+). Positions 644 to 647 (GMGD) match the Selectivity filter motif. A Ca(2+)-binding site is contributed by aspartate 647. The Extracellular segment spans residues 653–656 (NYDF). A helical transmembrane segment spans residues 657-683 (KAVFIILLLAYVILTYILLLNMLIALM). Topologically, residues 684-839 (GETVNKIAQE…FKDSMAPGEK (156 aa)) are cytoplasmic. The interval 685 to 713 (ETVNKIAQESKNIWKLQRAITILDTEKSF) is AD. Threonine 705 carries the post-translational modification Phosphothreonine. Residues 768-802 (EGVKRTLSFSLRSGRVSGRNWKNFALVPLLRDAST) are interaction with calmodulin. Position 775 is a phosphoserine (serine 775). A required for PIP2-mediated channel inhibition region spans residues 778-793 (LRSGRVSGRNWKNFAL). Serine 801 bears the Phosphoserine; by PKC/PRKCE and PKC/PRKCZ mark. Positions 802–815 (TRDRHSTQPEEVQL) are enriched in basic and acidic residues. The interval 802 to 839 (TRDRHSTQPEEVQLKHYTGSLKPEDAEVFKDSMAPGEK) is disordered. Serine 821 bears the Phosphoserine mark. Residues 823-839 (KPEDAEVFKDSMAPGEK) are compositionally biased toward basic and acidic residues.

Belongs to the transient receptor (TC 1.A.4) family. TrpV subfamily. TRPV1 sub-subfamily. In terms of assembly, homotetramer. May also form a heteromeric channel with TRPV3. Interacts with CALM, PRKCM and CSK. Interacts with PRKCG and NTRK1, probably by forming a trimeric complex. Interacts with PIRT. Interacts with the Scolopendra mutilans RhTx toxin. Interacts with TMEM100. Interacts with PACS2. Phosphorylation by PKA reverses capsaicin-induced dephosphorylation at multiple sites probably including Ser-117 as a major phosphorylation site. Phosphorylation by CAMKII seems to regulate binding to vanilloids. Phosphorylated and modulated by PRKCE, PRKCM and probably PRKCZ. Dephosphorylation by calcineurin seems to lead to receptor desensitization and phosphorylation by CAMKII recovers activity. Detected in neurons in the root ganglia (at protein level). Detected in dorsal root ganglia.

It is found in the postsynaptic cell membrane. Its subcellular location is the cell projection. The protein localises to the dendritic spine membrane. The protein resides in the cell membrane. The enzyme catalyses Ca(2+)(in) = Ca(2+)(out). The catalysed reaction is Mg(2+)(in) = Mg(2+)(out). It carries out the reaction Na(+)(in) = Na(+)(out). It catalyses the reaction K(+)(in) = K(+)(out). Its activity is regulated as follows. The channel is sensitized by ATP binding. Repeated stimulation with capsaicin gives rise to progressively smaller responses, due to desensitization. This desensitization is triggered by the influx of calcium ions and is inhibited by elevated ATP levels. Ca(2+) and CALM displace ATP from its binding site and trigger a conformation change that leads to a closed, desensitized channel. The double-knot toxin (DkTx) from the Chinese earth tiger tarantula activates the channel and traps it in an open conformation. The Scolopendra mutilans RhTx toxin potentiates the heat activation pathway mediated by this channel by binding to the charge-rich outer pore region (in an activated state). Channel activity is activated via the interaction with PIRT and phosphatidylinositol 4,5-bisphosphate (PIP2). Both PIRT and PIP2 are required to activate channel activity. Intracellular PIP2 inhibits desensitization. Functionally, non-selective calcium permeant cation channel involved in detection of noxious chemical and thermal stimuli. Seems to mediate proton influx and may be involved in intracellular acidosis in nociceptive neurons. Involved in mediation of inflammatory pain and hyperalgesia. Sensitized by a phosphatidylinositol second messenger system activated by receptor tyrosine kinases, which involves PKC isozymes and PCL. Activation by vanilloids, like capsaicin, and temperatures higher than 42 degrees Celsius. Upon activation, exhibits a time- and Ca(2+)-dependent outward rectification, followed by a long-lasting refractory state. Mild extracellular acidic pH (6.5) potentiates channel activation by noxious heat and vanilloids, whereas acidic conditions (pH &lt;6) directly activate the channel. Can be activated by endogenous compounds, including 12-hydroperoxytetraenoic acid and bradykinin. Acts as ionotropic endocannabinoid receptor with central neuromodulatory effects. Triggers a form of long-term depression (TRPV1-LTD) mediated by the endocannabinoid anandamine in the hippocampus and nucleus accumbens by affecting AMPA receptors endocytosis. The polypeptide is Transient receptor potential cation channel subfamily V member 1 (Trpv1) (Mus musculus (Mouse)).